The sequence spans 720 residues: Inactive serine protease PAMR1 (720 aa).

The first 21 residues, 1–21, serve as a signal peptide directing secretion; the sequence is MELGCWTQLGLTFLQLLLISS. 9 disulfides stabilise this stretch: cysteine 128–cysteine 150, cysteine 177–cysteine 199, cysteine 239–cysteine 250, cysteine 244–cysteine 260, cysteine 262–cysteine 271, cysteine 280–cysteine 329, cysteine 315–cysteine 342, cysteine 414–cysteine 442, and cysteine 489–cysteine 505. Residues 128-236 enclose the CUB domain; the sequence is CGQVLRAPKG…DGFHAIYEEI (109 aa). Positions 235–272 constitute an EGF-like domain; that stretch reads EITACSSSPCFHDGTCVLDKAGSYKCACLAGYTGQRCE. Sushi domains are found at residues 278-344 and 387-444; these read RNCS…ICIK and APTK…SCIP. The 276-residue stretch at 445–720 folds into the Peptidase S1 domain; that stretch reads ICGKIENITA…FKDWIERNMK (276 aa). The N-linked (GlcNAc...) asparagine glycan is linked to asparagine 614. Cystine bridges form between cysteine 630–cysteine 649 and cysteine 661–cysteine 697.

This sequence belongs to the peptidase S1 family.

Its subcellular location is the secreted. Its function is as follows. May play a role in regeneration of skeletal muscle. This chain is Inactive serine protease PAMR1 (PAMR1), found in Homo sapiens (Human).